Here is a 431-residue protein sequence, read N- to C-terminus: Serine--tRNA ligase (431 aa).

236–238 (TAE) serves as a coordination point for L-serine. 267 to 269 (RSE) contributes to the ATP binding site. Glu-290 provides a ligand contact to L-serine. 354 to 357 (EISS) is an ATP binding site. Ser-389 provides a ligand contact to L-serine.

It belongs to the class-II aminoacyl-tRNA synthetase family. Type-1 seryl-tRNA synthetase subfamily. As to quaternary structure, homodimer. The tRNA molecule binds across the dimer.

The protein resides in the cytoplasm. It carries out the reaction tRNA(Ser) + L-serine + ATP = L-seryl-tRNA(Ser) + AMP + diphosphate + H(+). The enzyme catalyses tRNA(Sec) + L-serine + ATP = L-seryl-tRNA(Sec) + AMP + diphosphate + H(+). It participates in aminoacyl-tRNA biosynthesis; selenocysteinyl-tRNA(Sec) biosynthesis; L-seryl-tRNA(Sec) from L-serine and tRNA(Sec): step 1/1. Catalyzes the attachment of serine to tRNA(Ser). Is also able to aminoacylate tRNA(Sec) with serine, to form the misacylated tRNA L-seryl-tRNA(Sec), which will be further converted into selenocysteinyl-tRNA(Sec). This Janthinobacterium sp. (strain Marseille) (Minibacterium massiliensis) protein is Serine--tRNA ligase.